We begin with the raw amino-acid sequence, 202 residues long: Glycerol-3-phosphate acyltransferase (202 aa).

The next 6 helical transmembrane spans lie at 2–22 (INLL…AVVV), 51–71 (KAAI…VLLA), 80–100 (VDET…LFPL), 116–136 (ILFA…LIIA), 137–157 (FFFR…PFFY), and 158–178 (VLMN…VLLI).

This sequence belongs to the PlsY family. As to quaternary structure, probably interacts with PlsX.

The protein resides in the cell inner membrane. The catalysed reaction is an acyl phosphate + sn-glycerol 3-phosphate = a 1-acyl-sn-glycero-3-phosphate + phosphate. It participates in lipid metabolism; phospholipid metabolism. Catalyzes the transfer of an acyl group from acyl-phosphate (acyl-PO(4)) to glycerol-3-phosphate (G3P) to form lysophosphatidic acid (LPA). This enzyme utilizes acyl-phosphate as fatty acyl donor, but not acyl-CoA or acyl-ACP. This chain is Glycerol-3-phosphate acyltransferase, found in Cupriavidus metallidurans (strain ATCC 43123 / DSM 2839 / NBRC 102507 / CH34) (Ralstonia metallidurans).